The following is a 159-amino-acid chain: Transcription elongation factor GreA (159 aa).

Positions 44 to 75 (SENAEYDAAREQQSQTEARIADLESKLSSATI) form a coiled coil.

This sequence belongs to the GreA/GreB family.

Its function is as follows. Necessary for efficient RNA polymerase transcription elongation past template-encoded arresting sites. The arresting sites in DNA have the property of trapping a certain fraction of elongating RNA polymerases that pass through, resulting in locked ternary complexes. Cleavage of the nascent transcript by cleavage factors such as GreA or GreB allows the resumption of elongation from the new 3'terminus. GreA releases sequences of 2 to 3 nucleotides. In Chlorobium phaeovibrioides (strain DSM 265 / 1930) (Prosthecochloris vibrioformis (strain DSM 265)), this protein is Transcription elongation factor GreA.